Consider the following 90-residue polypeptide: Probable Fe(2+)-trafficking protein (90 aa).

It belongs to the Fe(2+)-trafficking protein family.

Its function is as follows. Could be a mediator in iron transactions between iron acquisition and iron-requiring processes, such as synthesis and/or repair of Fe-S clusters in biosynthetic enzymes. In Koribacter versatilis (strain Ellin345), this protein is Probable Fe(2+)-trafficking protein.